Here is a 357-residue protein sequence, read N- to C-terminus: tRNA pseudouridine synthase B (357 aa).

Residue Asp42 is the Nucleophile of the active site.

This sequence belongs to the pseudouridine synthase TruB family. Type 1 subfamily.

It catalyses the reaction uridine(55) in tRNA = pseudouridine(55) in tRNA. Functionally, responsible for synthesis of pseudouridine from uracil-55 in the psi GC loop of transfer RNAs. This is tRNA pseudouridine synthase B from Treponema denticola (strain ATCC 35405 / DSM 14222 / CIP 103919 / JCM 8153 / KCTC 15104).